The primary structure comprises 584 residues: Glutathione hydrolase proenzyme (584 aa).

Positions 1–25 (MAPAAMNLLCTVLYLLSSFAQVSDA) are cleaved as a signal peptide. N-linked (GlcNAc...) asparagine glycosylation is present at asparagine 111. Arginine 120 is an L-glutamate binding site. N-linked (GlcNAc...) asparagine glycosylation is found at asparagine 135, asparagine 262, asparagine 272, asparagine 350, and asparagine 370. The active-site Nucleophile is the threonine 395. L-glutamate is bound by residues threonine 413, glutamate 434, and 465 to 466 (SS). N-linked (GlcNAc...) asparagine glycosylation is present at asparagine 547.

Belongs to the gamma-glutamyltransferase family. In terms of assembly, heterodimer composed of the light and heavy chains. The active site is located in the light chain. In terms of processing, cleaved by autocatalysis into a large and a small subunit and the autocatalytic cleavage is essential to the functional activation of the enzyme.

It is found in the secreted. It catalyses the reaction an N-terminal (5-L-glutamyl)-[peptide] + an alpha-amino acid = 5-L-glutamyl amino acid + an N-terminal L-alpha-aminoacyl-[peptide]. It carries out the reaction glutathione + H2O = L-cysteinylglycine + L-glutamate. The catalysed reaction is an S-substituted glutathione + H2O = an S-substituted L-cysteinylglycine + L-glutamate. The enzyme catalyses leukotriene C4 + H2O = leukotriene D4 + L-glutamate. The protein operates within sulfur metabolism; glutathione metabolism. Cleaves the gamma-glutamyl bond of extracellular glutathione (gamma-Glu-Cys-Gly), glutathione conjugates, and other gamma-glutamyl compounds. The metabolism of glutathione releases free glutamate and the dipeptide cysteinyl-glycine, which is hydrolyzed to cysteine and glycine by dipeptidases. In the presence of high concentrations of dipeptides and some amino acids, can also catalyze a transpeptidation reaction, transferring the gamma-glutamyl moiety to an acceptor amino acid to form a new gamma-glutamyl compound. Initiates extracellular glutathione (GSH) breakdown, provides cells with a local cysteine supply and contributes to maintain intracellular GSH level. It is part of the cell antioxidant defense mechanism. The protein is Glutathione hydrolase proenzyme of Arthroderma benhamiae (strain ATCC MYA-4681 / CBS 112371) (Trichophyton mentagrophytes).